The following is a 347-amino-acid chain: Dihydroorotase (347 aa).

The Zn(2+) site is built by His14 and His16. Substrate-binding positions include 16-18 (HLR) and Asn42. Zn(2+)-binding residues include Lys100, His137, and His175. N6-carboxylysine is present on Lys100. His137 is a substrate binding site. Residue Leu220 coordinates substrate. Asp248 is a Zn(2+) binding site. Residue Asp248 is part of the active site. His252 and Ala264 together coordinate substrate.

Belongs to the metallo-dependent hydrolases superfamily. DHOase family. Class II DHOase subfamily. In terms of assembly, homodimer. Zn(2+) is required as a cofactor.

It carries out the reaction (S)-dihydroorotate + H2O = N-carbamoyl-L-aspartate + H(+). The protein operates within pyrimidine metabolism; UMP biosynthesis via de novo pathway; (S)-dihydroorotate from bicarbonate: step 3/3. In terms of biological role, catalyzes the reversible cyclization of carbamoyl aspartate to dihydroorotate. The sequence is that of Dihydroorotase from Jannaschia sp. (strain CCS1).